The primary structure comprises 81 residues: Cell division protein ZapB (81 aa).

A coiled-coil region spans residues 6–80; sequence EVFEKLEAKV…LQALLGRMEE (75 aa). Polar residues predominate over residues 38 to 47; the sequence is SLAQDVQSAQ. The interval 38-67 is disordered; sequence SLAQDVQSAQHQREELERENNHLKEQQSGW. The segment covering 48-62 has biased composition (basic and acidic residues); the sequence is HQREELERENNHLKE.

Belongs to the ZapB family. In terms of assembly, homodimer. The ends of the coiled-coil dimer bind to each other, forming polymers. Interacts with FtsZ.

The protein localises to the cytoplasm. In terms of biological role, non-essential, abundant cell division factor that is required for proper Z-ring formation. It is recruited early to the divisome by direct interaction with FtsZ, stimulating Z-ring assembly and thereby promoting cell division earlier in the cell cycle. Its recruitment to the Z-ring requires functional FtsA or ZipA. The polypeptide is Cell division protein ZapB (Citrobacter koseri (strain ATCC BAA-895 / CDC 4225-83 / SGSC4696)).